We begin with the raw amino-acid sequence, 125 residues long: Protein ApaG (125 aa).

In terms of domain architecture, ApaG spans 1–125 (MINSPRVCIQ…FRLAVPTLIH (125 aa)).

The polypeptide is Protein ApaG (Citrobacter koseri (strain ATCC BAA-895 / CDC 4225-83 / SGSC4696)).